A 134-amino-acid polypeptide reads, in one-letter code: Two-component response regulator ORR5 (134 aa).

The Response regulatory domain occupies His-16–Leu-133. Asp-66 carries the post-translational modification 4-aspartylphosphate.

The protein belongs to the ARR family. Type-A subfamily. Post-translationally, two-component system major event consists of a His-to-Asp phosphorelay between a sensor histidine kinase (HK) and a response regulator (RR). In plants, the His-to-Asp phosphorelay involves an additional intermediate named Histidine-containing phosphotransfer protein (HPt). This multistep phosphorelay consists of a His-Asp-His-Asp sequential transfer of a phosphate group between first a His and an Asp of the HK protein, followed by the transfer to a conserved His of the HPt protein and finally the transfer to an Asp in the receiver domain of the RR protein. As to expression, expressed in mature leaves and shoots, and at low levels in roots and flowers.

Its function is as follows. Functions as a response regulator involved in His-to-Asp phosphorelay signal transduction system. Phosphorylation of the Asp residue in the receiver domain activates the ability of the protein to promote the transcription of target genes. Type-A response regulators seem to act as negative regulators of the cytokinin signaling. This is Two-component response regulator ORR5 from Oryza sativa subsp. indica (Rice).